A 327-amino-acid chain; its full sequence is NF-kappa-B inhibitor delta (327 aa).

The disordered stretch occupies residues 1–40; it reads MEDSLDTRLYPEPSLSQVGSWRVSSLPSGSPQLPSPTGPS. Polar residues predominate over residues 14–23; it reads SLSQVGSWRV. ANK repeat units lie at residues 62–97, 98–127, 131–160, 166–215, 220–250, and 257–290; these read EGDTLLHLFAARGLRWAAYAAAEVLQMYRQLDIREH, KGKTPLLVAAAANQPLIVEDLLSLGAEPNA, QGRSVLHVAATYGLPGVLSAVFKSGIQVDL, EGLT…SHTS, SNKTILHLAVQAANPTLVQLLLGLPRGDLRA, and HGNTALHMAAALPPGPPQEAIVRHLLAAGADPTL. Residues 293–327 form a disordered region; sequence LENEQPVHLLRPGPGPEGLRQLLKRSRTAPPGLSS.

The protein belongs to the NF-kappa-B inhibitor family. In terms of assembly, interacts with NFKB1, RELA and RELB; in the nucleus. In terms of tissue distribution, specifically expressed in spleen and at low levels in thymus. Expressed in a population of antigen-presenting dendritic cells which may act as regulators of systemic inflammatory response.

Its subcellular location is the nucleus. In terms of biological role, regulates the expression of IL-2, IL-6, and other cytokines through regulation on NF-kappa-B activity. Functions in the regulation of inflammatory responses. Involved in the induction of T helper 17 cells (Th17) differentiation upon recognition of antigen by T cell antigen receptor (TCR). According to PubMed:11931770, it may also regulate TCR-induced negative selection of thymocytes. This is NF-kappa-B inhibitor delta (Nfkbid) from Mus musculus (Mouse).